Consider the following 218-residue polypeptide: MKLILLGAPGAGKGTQATFICQKYGIPQISTGDMLRAAVKAGTPLGIEAKKVMDSGGLVSDDLIINLVKERIAQPDCAQGFLFDGFPRTIPQADAMKAAGVKIDYVLEIDVPFEAIIERMSGRRSHSASGRTYHVKYNPPKVEGLDDVTGEPLIQREDDKEETVAKRLEVYSAQTRPLVAYYSDWATEAPDEAPKYRAISGTGTVEEITERAFKALSN.

10–15 is a binding site for ATP; that stretch reads GAGKGT. The interval 30 to 59 is NMP; sequence STGDMLRAAVKAGTPLGIEAKKVMDSGGLV. AMP contacts are provided by residues Thr-31, Arg-36, 57 to 59, 85 to 88, and Gln-92; these read GLV and GFPR. The LID stretch occupies residues 122–159; the sequence is GRRSHSASGRTYHVKYNPPKVEGLDDVTGEPLIQREDD. ATP contacts are provided by residues Arg-123 and 132 to 133; that span reads TY. Residues Arg-156 and Arg-167 each contribute to the AMP site. Position 203 (Gly-203) interacts with ATP.

The protein belongs to the adenylate kinase family. As to quaternary structure, monomer.

It is found in the cytoplasm. The catalysed reaction is AMP + ATP = 2 ADP. The protein operates within purine metabolism; AMP biosynthesis via salvage pathway; AMP from ADP: step 1/1. In terms of biological role, catalyzes the reversible transfer of the terminal phosphate group between ATP and AMP. Plays an important role in cellular energy homeostasis and in adenine nucleotide metabolism. In Polaromonas naphthalenivorans (strain CJ2), this protein is Adenylate kinase.